We begin with the raw amino-acid sequence, 82 residues long: Cytochrome b559 subunit alpha (82 aa).

A helical transmembrane segment spans residues 22-36 (VIHFVTLPSIFLAGF). Residue His24 coordinates heme.

It belongs to the PsbE/PsbF family. Heterodimer of an alpha subunit and a beta subunit. PSII is composed of 1 copy each of membrane proteins PsbA, PsbB, PsbC, PsbD, PsbE, PsbF, PsbH, PsbI, PsbJ, PsbK, PsbL, PsbM, PsbT, PsbX, PsbY, PsbZ, Psb30/Ycf12, peripheral proteins PsbO, CyanoQ (PsbQ), PsbU, PsbV and a large number of cofactors. It forms dimeric complexes. The cofactor is heme b.

It localises to the cellular thylakoid membrane. This b-type cytochrome is tightly associated with the reaction center of photosystem II (PSII). PSII is a light-driven water:plastoquinone oxidoreductase that uses light energy to abstract electrons from H(2)O, generating O(2) and a proton gradient subsequently used for ATP formation. It consists of a core antenna complex that captures photons, and an electron transfer chain that converts photonic excitation into a charge separation. The protein is Cytochrome b559 subunit alpha of Parasynechococcus marenigrum (strain WH8102).